We begin with the raw amino-acid sequence, 203 residues long: ATP-dependent Clp protease proteolytic subunit (203 aa).

Catalysis depends on Ser107, which acts as the Nucleophile. The active site involves His132.

This sequence belongs to the peptidase S14 family. Fourteen ClpP subunits assemble into 2 heptameric rings which stack back to back to give a disk-like structure with a central cavity, resembling the structure of eukaryotic proteasomes.

The protein resides in the cytoplasm. It catalyses the reaction Hydrolysis of proteins to small peptides in the presence of ATP and magnesium. alpha-casein is the usual test substrate. In the absence of ATP, only oligopeptides shorter than five residues are hydrolyzed (such as succinyl-Leu-Tyr-|-NHMec, and Leu-Tyr-Leu-|-Tyr-Trp, in which cleavage of the -Tyr-|-Leu- and -Tyr-|-Trp bonds also occurs).. Functionally, cleaves peptides in various proteins in a process that requires ATP hydrolysis. Has a chymotrypsin-like activity. Plays a major role in the degradation of misfolded proteins. The sequence is that of ATP-dependent Clp protease proteolytic subunit from Shewanella denitrificans (strain OS217 / ATCC BAA-1090 / DSM 15013).